We begin with the raw amino-acid sequence, 461 residues long: Acetylornithine aminotransferase, mitochondrial (461 aa).

Positions 36 to 56 (YATASQLTHPDPTEDSPSGKM) are disordered. Lysine 312 carries the post-translational modification N6-(pyridoxal phosphate)lysine.

It belongs to the class-III pyridoxal-phosphate-dependent aminotransferase family. The cofactor is pyridoxal 5'-phosphate.

It localises to the mitochondrion matrix. The catalysed reaction is N(2)-acetyl-L-ornithine + 2-oxoglutarate = N-acetyl-L-glutamate 5-semialdehyde + L-glutamate. It functions in the pathway amino-acid biosynthesis; L-arginine biosynthesis; N(2)-acetyl-L-ornithine from L-glutamate: step 4/4. This chain is Acetylornithine aminotransferase, mitochondrial (arg-8), found in Neurospora crassa (strain ATCC 24698 / 74-OR23-1A / CBS 708.71 / DSM 1257 / FGSC 987).